The following is a 422-amino-acid chain: Protein FAM53B (422 aa).

S118, S167, S169, S179, S212, and S268 each carry phosphoserine. Residues 245 to 268 (SANSTPASTPELARRSSGLSRSRS) show a composition bias toward low complexity. Residues 245 to 269 (SANSTPASTPELARRSSGLSRSRSQ) are disordered. The Nuclear localization signal motif lies at 281-284 (KRRR).

This sequence belongs to the FAM53 family. Interacts with CTNNB1. As to expression, detected in skeletal muscle, kidney, spleen, thyroid, testis, ovary, small intestine, colon and peripheral blood.

It is found in the nucleus. Its function is as follows. Acts as a regulator of Wnt signaling pathway by regulating beta-catenin (CTNNB1) nuclear localization. In Homo sapiens (Human), this protein is Protein FAM53B.